The chain runs to 298 residues: Mitochondrial basic amino acids transporter (298 aa).

Helical transmembrane passes span 2 to 22 (ALDF…GHPF), 61 to 81 (GLGS…GVQG), 96 to 116 (FLAG…MELA), 153 to 172 (GMVS…FLTY), 187 to 207 (LLVP…WLST), and 255 to 275 (LLRA…VLSY). 3 Solcar repeats span residues 2–86 (ALDF…TLRA), 90–178 (DSPL…LTRA), and 185–275 (DRLL…VLSY).

It belongs to the mitochondrial carrier (TC 2.A.29) family.

The protein localises to the mitochondrion inner membrane. The catalysed reaction is L-lysine(out) + L-arginine(in) = L-lysine(in) + L-arginine(out). The enzyme catalyses L-histidine(out) + L-arginine(in) = L-histidine(in) + L-arginine(out). It carries out the reaction L-ornithine(in) + L-arginine(out) = L-ornithine(out) + L-arginine(in). It catalyses the reaction L-homoarginine(in) + L-arginine(out) = L-homoarginine(out) + L-arginine(in). The catalysed reaction is N(omega)-methyl-L-arginine(in) + L-arginine(out) = N(omega)-methyl-L-arginine(out) + L-arginine(in). The enzyme catalyses L-arginine(in) = L-arginine(out). It carries out the reaction L-lysine(in) = L-lysine(out). It catalyses the reaction L-ornithine(in) = L-ornithine(out). The catalysed reaction is L-histidine(out) = L-histidine(in). Its function is as follows. Mitochondrial transporter of arginine, lysine, homoarginine, methylarginine and, to a much lesser extent, ornithine and histidine. Does not transport carnitine nor acylcarnitines. Functions by both counter-exchange and uniport mechanisms. Plays a physiological role in the import of basic amino acids into mitochondria for mitochondrial protein synthesis and amino acid degradation. In Bos taurus (Bovine), this protein is Mitochondrial basic amino acids transporter (SLC25A29).